Reading from the N-terminus, the 112-residue chain is Ig kappa chain V-III region TEPC 124 (112 aa).

Positions 1-23 (DIVLTQSPASLAVSLGQRATISC) are framework-1. Cys-23 and Cys-92 are oxidised to a cystine. The interval 24-38 (RASZSVNWYGNSFMZ) is complementarity-determining-1. Residues 39-53 (WYZZKPGZPPKLLIY) are framework-2. The complementarity-determining-2 stretch occupies residues 54–60 (RASNLZS). The interval 61–92 (GIPARFSGSGSRTBFTLTIBPVZABDVATYFC) is framework-3. Residues 93–101 (ZZSBZAPWT) form a complementarity-determining-3 region. The framework-4 stretch occupies residues 102-111 (FGSGTKLEIK).

This is Ig kappa chain V-III region TEPC 124 from Mus musculus (Mouse).